Here is an 846-residue protein sequence, read N- to C-terminus: Pseudolaratriene synthase, chloroplastic (846 aa).

The transit peptide at Met1 to Met58 directs the protein to the chloroplast. Positions 595, 599, and 747 each coordinate Mg(2+). The DDXXD motif signature appears at Asp595 to Asp599.

This sequence belongs to the terpene synthase family. Mg(2+) serves as cofactor. As to expression, expressed in young and mature roots. Expressed at low levels in barks.

It localises to the plastid. It is found in the chloroplast. It carries out the reaction (2E,6E,10E)-geranylgeranyl diphosphate = pseudolaratriene + diphosphate. Its pathway is terpene metabolism. Functionally, converts geranylgeranyl diphosphate to an new 5,7-fused bicyclic diterpene, named pseudolaratriene. Catalyzes the first committed step in pseudolaric acid B (PAB) biosynthesis. PAB exhibits antiproliferative activity by inhibiting microtubule polymerization, and has demonstrated antitumor properties against several cancer types. The chain is Pseudolaratriene synthase, chloroplastic from Pseudolarix amabilis (Golden larch).